Consider the following 75-residue polypeptide: Translation initiation factor IF-1 (75 aa).

The S1-like domain occupies M1 to K75.

The protein belongs to the IF-1 family. In terms of assembly, component of the 30S ribosomal translation pre-initiation complex which assembles on the 30S ribosome in the order IF-2 and IF-3, IF-1 and N-formylmethionyl-tRNA(fMet); mRNA recruitment can occur at any time during PIC assembly.

It localises to the cytoplasm. In terms of biological role, one of the essential components for the initiation of protein synthesis. Stabilizes the binding of IF-2 and IF-3 on the 30S subunit to which N-formylmethionyl-tRNA(fMet) subsequently binds. Helps modulate mRNA selection, yielding the 30S pre-initiation complex (PIC). Upon addition of the 50S ribosomal subunit IF-1, IF-2 and IF-3 are released leaving the mature 70S translation initiation complex. The chain is Translation initiation factor IF-1 from Mesomycoplasma hyopneumoniae (strain 232) (Mycoplasma hyopneumoniae).